Consider the following 641-residue polypeptide: Putative phagocytic receptor 1a (641 aa).

Positions 1–23 (MKINKKQIVFFILFSIFLNHVNG) are cleaved as a signal peptide. The Extracellular segment spans residues 24-279 (IFYLPGMIPH…ESNDNSVHWF (256 aa)). Residues 280–300 (SILNSLMIVFILTVMVAMIII) traverse the membrane as a helical segment. The Cytoplasmic segment spans residues 301 to 349 (RTLKKDIRRYTSIDTSEDRDSQEETGWKMIHGDVFRPPSHPMLLSVCIG). Residues 350 to 370 (SGVQIFSMTLITMIFAVLGFL) traverse the membrane as a helical segment. The Extracellular portion of the chain corresponds to 371–374 (SPAN). A helical transmembrane segment spans residues 375 to 395 (IGGLATALIVLFVLSAMFAGY). At 396–413 (FSTRVFTIFKGRNWKKNT) the chain is on the cytoplasmic side. A helical transmembrane segment spans residues 414–434 (IYTALSMPGIIFGIFFFVNMF). The Extracellular segment spans residues 435-445 (LRGAKSSAAVP). The helical transmembrane segment at 446–466 (FGTFASIIAMWFGISVPLVFL) threads the bilayer. The Cytoplasmic segment spans residues 467 to 502 (GSYFASKKPVPEDPVRTNQIPRQVPDQIWYMNPYLS). The chain crosses the membrane as a helical span at residues 503–523 (ILMGGILPFGAVFIELHFILT). Residues 524-532 (SLWDNQFYY) are Extracellular-facing. Residues 533–553 (IFGFLFIVLMILIVTSAEISI) form a helical membrane-spanning segment. Topologically, residues 554–578 (VMCYFQLCAEDHHWWWRSFLTAGSS) are cytoplasmic. A helical membrane pass occupies residues 579–599 (SLYMFIYSVSFFRYLGITKFI). At 600–608 (SSLLDFSYS) the chain is on the extracellular side. The chain crosses the membrane as a helical span at residues 609-629 (FIMSLAFAALTGTIGFYSCYF). At 630-641 (LVRKIYSSIHIN) the chain is on the cytoplasmic side.

This sequence belongs to the nonaspanin (TM9SF) (TC 9.A.2) family.

The protein resides in the membrane. In terms of biological role, involved in adhesion, phagocytosis of hydrophilic particles and intracellular killing of bacteria. Associates with proteins harboring glycine-rich transmembrane domains and ensures their efficient localization to the cell surface. In Dictyostelium discoideum (Social amoeba), this protein is Putative phagocytic receptor 1a (phg1a).